Reading from the N-terminus, the 231-residue chain is MTRTTTCVYHFLVWNWYIFLNYYIPLIGKDDEKLKEFHDGGRSKYLTLLNLLLQAIFFGVACLDDVLKRIIGRKDIKFITSTRDLLFSTLVFPISTFIFLVFWTLFYYDRSLIYPKGLDDYFPAWLNHAMHTYILLFVLVETILRPHHYPSKKLGLALLGACNLAYITRVLWRYSQTGNWVYPVFASLNPLGIIIFFLVCYILNASIYLVGEKINHWKWGATVKPLMKKKK.

The Cytoplasmic segment spans residues 1–7; the sequence is MTRTTTC. A helical transmembrane segment spans residues 8-28; it reads VYHFLVWNWYIFLNYYIPLIG. The Extracellular segment spans residues 29–45; it reads KDDEKLKEFHDGGRSKY. Residues 46–66 traverse the membrane as a helical segment; that stretch reads LTLLNLLLQAIFFGVACLDDV. Over 67–85 the chain is Cytoplasmic; sequence LKRIIGRKDIKFITSTRDL. A helical membrane pass occupies residues 86–106; it reads LFSTLVFPISTFIFLVFWTLF. Residues 107-123 lie on the Extracellular side of the membrane; it reads YYDRSLIYPKGLDDYFP. A helical transmembrane segment spans residues 124–144; it reads AWLNHAMHTYILLFVLVETIL. Over 145–154 the chain is Cytoplasmic; the sequence is RPHHYPSKKL. The chain crosses the membrane as a helical span at residues 155–172; it reads GLALLGACNLAYITRVLW. The Extracellular segment spans residues 173–190; sequence RYSQTGNWVYPVFASLNP. A helical transmembrane segment spans residues 191-211; the sequence is LGIIIFFLVCYILNASIYLVG. Residues 212–231 lie on the Cytoplasmic side of the membrane; sequence EKINHWKWGATVKPLMKKKK.

It belongs to the AIG1 family. As to expression, highly expressed in flank organs and weakly in testis and earlobes.

It is found in the cell membrane. It carries out the reaction 9-hexadecanoyloxy-octadecanoate + H2O = 9-hydroxy-octadecanoate + hexadecanoate + H(+). It catalyses the reaction 12-hexadecanoyloxy-octadecanoate + H2O = 12-hydroxyoctadecanoate + hexadecanoate + H(+). The enzyme catalyses 9-(9Z-hexadecenoyloxy)-octadecanoate + H2O = (9Z)-hexadecenoate + 9-hydroxy-octadecanoate + H(+). The catalysed reaction is 12-(9Z-hexadecenoyloxy)-octadecanoate + H2O = 12-hydroxyoctadecanoate + (9Z)-hexadecenoate + H(+). It carries out the reaction 13-(9Z-hexadecenoyloxy)-octadecanoate + H2O = 13-hydroxy-octadecanoate + (9Z)-hexadecenoate + H(+). It catalyses the reaction 9-octadecanoyloxy-octadecanoate + H2O = 9-hydroxy-octadecanoate + octadecanoate + H(+). The enzyme catalyses 12-octadecanoyloxy-octadecanoate + H2O = 12-hydroxyoctadecanoate + octadecanoate + H(+). The catalysed reaction is 13-octadecanoyloxy-octadecanoate + H2O = 13-hydroxy-octadecanoate + octadecanoate + H(+). It carries out the reaction 9-(9Z-octadecenoyloxy)-octadecanoate + H2O = 9-hydroxy-octadecanoate + (9Z)-octadecenoate + H(+). It catalyses the reaction 12-(9Z-octadecenoyloxy)-octadecanoate + H2O = 12-hydroxyoctadecanoate + (9Z)-octadecenoate + H(+). The enzyme catalyses 13-(9Z-octadecenoyloxy)-octadecanoate + H2O = 13-hydroxy-octadecanoate + (9Z)-octadecenoate + H(+). The catalysed reaction is 5-(9Z-octadecenoyloxy)-octadecanoate + H2O = 5-hydroxy-octadecanoate + (9Z)-octadecenoate + H(+). Its function is as follows. Hydrolyzes bioactive fatty-acid esters of hydroxy-fatty acids (FAHFAs), but not other major classes of lipids. Shows a preference for FAHFAs with branching distal from the carboxylate head group of the lipids. Regulates the expression and the cell-associated anticoagulant activity of the inhibitor TFPI in endothelial cells (in vitro). The protein is Androgen-dependent TFPI-regulating protein (ADTRP) of Mesocricetus auratus (Golden hamster).